A 571-amino-acid chain; its full sequence is 5' exonuclease Apollo (571 aa).

2 disordered regions span residues 346–386 (TSRP…TDRN) and 431–487 (MDDN…SMHD). Basic and acidic residues-rich tracts occupy residues 367–386 (NHDD…TDRN) and 453–468 (ECDH…EKSP). Residues 470 to 487 (MGSTNSGEMCSSMDSMHD) show a composition bias toward polar residues. The short motif at 501–532 (NPQSVTSAIPITLESEQFEHWLLENFTIPAEE) is the TBM element.

Belongs to the DNA repair metallo-beta-lactamase (DRMBL) family. In terms of assembly, interacts with terf2; the interaction is direct.

The protein resides in the chromosome. It is found in the telomere. It localises to the nucleus. The enzyme catalyses a beta-lactam + H2O = a substituted beta-amino acid. 5'-3' exonuclease that plays a central role in telomere maintenance and protection during S-phase. Participates in the protection of telomeres against non-homologous end-joining (NHEJ)-mediated repair, thereby ensuring that telomeres do not fuse. Plays a key role in telomeric loop (T loop) formation by being recruited by terf2 at the leading end telomeres and by processing leading-end telomeres immediately after their replication via its exonuclease activity: generates 3' single-stranded overhang at the leading end telomeres avoiding blunt leading-end telomeres that are vulnerable to end-joining reactions and expose the telomere end in a manner that activates the DNA repair pathways. Possesses beta-lactamase activity, catalyzing the hydrolysis of penicillin G and nitrocefin. Exhibits no activity towards other beta-lactam antibiotic classes including cephalosporins (cefotaxime) and carbapenems (imipenem). In Danio rerio (Zebrafish), this protein is 5' exonuclease Apollo (dclre1b).